Here is a 235-residue protein sequence, read N- to C-terminus: Large ribosomal subunit protein uL1 (235 aa).

This sequence belongs to the universal ribosomal protein uL1 family. In terms of assembly, part of the 50S ribosomal subunit.

Functionally, binds directly to 23S rRNA. The L1 stalk is quite mobile in the ribosome, and is involved in E site tRNA release. In terms of biological role, protein L1 is also a translational repressor protein, it controls the translation of the L11 operon by binding to its mRNA. The sequence is that of Large ribosomal subunit protein uL1 from Mycobacterium sp. (strain JLS).